Consider the following 459-residue polypeptide: MIQKQHESKLEVGQTFPVTIKRLGINGEGVGYFKRQVVFIPGALPGEEVVAETTKIQRGFAEAKVKKVRKASPHRVKAPCPVYEECGGCQLQHLDYKEQLNQKRDIVVQAFQKYMNNGLEEKIRPTLGMENPWHYRNKSQLQVGRKDEKVITGLYKQNSHQLIDIAHCMIQHKATNEATKVVRRILEKLNVSIYNEKKQKGLVRTIVTRTAVQTGEVQVTLITTKEELPNKEQFIAEVQKQMPAVKSIMQNVNWRKTSVIFGDKTFKLAGKEVIQETLGDLSFELSARAFFQLNPEQTVVLYNEAKKAAALTGNEKIVDAYCGVGTIGLWLANDAAEVRGMDVIPEAIADARKNAKRHGFTNTKYEAGKAEQWLPKWVKEGWRPDVIVVDPPRTGCDDKLLETILKVKPKQVVYVSCNPSSLARDVQALMKSYEVEYVQPVDMFPHTAHVENVVKLVRK.

The TRAM domain maps to 9–67; that stretch reads KLEVGQTFPVTIKRLGINGEGVGYFKRQVVFIPGALPGEEVVAETTKIQRGFAEAKVKK. [4Fe-4S] cluster-binding residues include Cys-80, Cys-86, Cys-89, and Cys-168. Residues Gln-292, Tyr-321, Asp-342, and Asp-390 each contribute to the S-adenosyl-L-methionine site. The active-site Nucleophile is Cys-417.

This sequence belongs to the class I-like SAM-binding methyltransferase superfamily. RNA M5U methyltransferase family.

This is an uncharacterized protein from Bacillus cereus (strain ATCC 10987 / NRS 248).